A 278-amino-acid chain; its full sequence is Thioredoxin-related transmembrane protein 1 (278 aa).

Positions 1–26 are cleaved as a signal peptide; sequence MAPSGSLRIPVAVLLLLLWGAPWAHG. The region spanning 27–132 is the Thioredoxin domain; that stretch reads KRSDVRIITD…FINFISDKEW (106 aa). Residues 27-180 lie on the Extracellular side of the membrane; it reads KRSDVRIITD…EDLGLPIWGS (154 aa). Residues Cys-56 and Cys-59 each act as nucleophile in the active site. An intrachain disulfide couples Cys-56 to Cys-59. Residues 181 to 203 traverse the membrane as a helical segment; the sequence is YTVFALATLLSGLLLGLFMIFVA. Topologically, residues 204-278 are cytoplasmic; that stretch reads DCLCPSKRRR…VGPSLATDKS (75 aa). Residues Cys-205 and Cys-207 are each lipidated (S-palmitoyl cysteine). Positions 213-278 are disordered; that stretch reads RPQPYPSRKL…VGPSLATDKS (66 aa). Residues Ser-226, Ser-245, Ser-268, Ser-272, and Ser-278 each carry the phosphoserine modification. Acidic residues predominate over residues 235–250; sequence EEQEADVEDVSEEESE.

In terms of assembly, interacts with ATP2A2. Palmitoylated; palmitoylation is required for localization to mitochondria-associated endoplasmic reticulum membrane (MAM).

Its subcellular location is the endoplasmic reticulum membrane. It localises to the mitochondrion membrane. It is found in the secreted. It carries out the reaction Catalyzes the rearrangement of -S-S- bonds in proteins.. In terms of biological role, thiredoxin domain-containing protein that participates in various redox reactions through the reversible oxidation of its active center dithiol to a disulfide and catalyze dithiol-disulfide exchange reactions. Acts as a key inhibitor of the alternative triglyceride biosynthesis pathway by inhibiting the activity of TMEM68/DIESL at the endoplasmic reticulum, thereby restricting accumulation of triacylglycerol. The alternative triglyceride biosynthesis pathway mediates formation of triacylglycerol from diacylglycerol and membrane phospholipids. Acts as a protein disulfide isomerase by catalyzing formation or reduction of disulfide bonds. Specifically mediates formation of disulfide bonds of transmembrane proteins at the endoplasmic reticulum membrane. Involved in endoplasmic reticulum-associated degradation (ERAD) via its protein disulfide isomerase activity by acting on folding-defective polypeptides at the endoplasmic reticulum membrane. Acts as a negative regulator of platelet aggregation following secretion in the extracellular space. Acts as a regulator of endoplasmic reticulum-mitochondria contact sites via its ability to regulate redox signals. Regulates endoplasmic reticulum-mitochondria Ca(2+) flux. The chain is Thioredoxin-related transmembrane protein 1 (TMX1) from Bos taurus (Bovine).